Consider the following 299-residue polypeptide: Formin-like protein 12 (299 aa).

One can recognise an FH2 domain in the interval 1–295 (MASNCEKMLS…LEKRKMNIKQ (295 aa)).

The protein belongs to the formin-like family. Class-II subfamily.

This Arabidopsis thaliana (Mouse-ear cress) protein is Formin-like protein 12 (FH12).